A 150-amino-acid polypeptide reads, in one-letter code: Transcriptional repressor NrdR (150 aa).

The segment at 3–34 is a zinc-finger region; the sequence is CPFCQHDHSKVIDSRVIDAGSAIRRRRECSKC. One can recognise an ATP-cone domain in the interval 46–136; the sequence is LLVVKRNGVT…VYKSFDSADD (91 aa).

The protein belongs to the NrdR family. Zn(2+) serves as cofactor.

Functionally, negatively regulates transcription of bacterial ribonucleotide reductase nrd genes and operons by binding to NrdR-boxes. The chain is Transcriptional repressor NrdR from Corynebacterium glutamicum (strain ATCC 13032 / DSM 20300 / JCM 1318 / BCRC 11384 / CCUG 27702 / LMG 3730 / NBRC 12168 / NCIMB 10025 / NRRL B-2784 / 534).